We begin with the raw amino-acid sequence, 388 residues long: Homeobox protein XHOX-3 (388 aa).

2 disordered regions span residues A30–Y109 and S131–C163. Polar residues-rich tracts occupy residues A68 to I81 and D91 to D103. The homeobox DNA-binding region spans M168–R227.

It belongs to the even-skipped homeobox family.

It localises to the nucleus. In terms of biological role, may be required for posterior development and development of normal embryonic axial pattern. The protein is Homeobox protein XHOX-3 (xhox3) of Xenopus laevis (African clawed frog).